A 3027-amino-acid polypeptide reads, in one-letter code: DmX-like protein 1 (3027 aa).

WD repeat units lie at residues 108 to 145 (FLES…KPTE), 166 to 206 (KTAS…RTAV), and 229 to 277 (AHPR…NDCL). A phosphoserine mark is found at Ser-324, Ser-422, Ser-425, and Ser-436. A compositionally biased stretch (polar residues) spans 420–433 (PSSEASVEDSNQAD). The disordered stretch occupies residues 420–450 (PSSEASVEDSNQADVKSDEETDDGVDDLKIN). The WD 4 repeat unit spans residues 476-516 (DHQIEVLLSEWSKNADMLFSIHPMDGSLLVWHVDWLDEYQP). Positions 563 to 584 (KQKPSGLTRSTSMLISSGHNKS) are disordered. Phosphoserine is present on Ser-574. 3 WD repeats span residues 580–621 (GHNK…ESAF), 628–665 (SHKS…RTPD), and 848–895 (GKDS…IPVS). Residues Ser-918 and Ser-924 each carry the phosphoserine modification. WD repeat units follow at residues 968 to 1010 (PSAG…GESA), 1134 to 1175 (SNTK…VQDQ), and 1211 to 1251 (GSPP…EPVI). Residues Ser-1830, Ser-1896, Ser-1908, and Ser-1970 each carry the phosphoserine modification. Disordered regions lie at residues 2367-2412 (PSKE…SSAP) and 2446-2468 (SRAE…DDDD). The span at 2451–2468 (DSEESLGSDDDDNDDDDD) shows a compositional bias: acidic residues. WD repeat units follow at residues 2742 to 2783 (KAIN…TCFR), 2785 to 2824 (GGNS…CPVT), 2836 to 2878 (CHNK…ANSL), 2884 to 2923 (CHDS…QRQL), 2926 to 2965 (SHDS…LLHT), and 2978 to 3016 (NIGT…SPLN).

As to expression, expressed in bone, breast, eye, foreskin, heart, parathyroid, small intestine, testis, tonsils, placenta and uterus.

The chain is DmX-like protein 1 (DMXL1) from Homo sapiens (Human).